The sequence spans 426 residues: Putative two-component response regulator ARR20 (426 aa).

The region spanning 40-155 is the Response regulatory domain; that stretch reads SNRVLLVGAD…VIAVLWRHVY (116 aa). Residue D91 is modified to 4-aspartylphosphate. The segment at 161–216 is disordered; sequence KSGLDKPGESGTVESDPDEYDDLEQDNLYESNEEGSKNTCDHKEEKSPTKKPRMQW. Residues 175–193 show a composition bias toward acidic residues; it reads SDPDEYDDLEQDNLYESNE. Basic and acidic residues predominate over residues 194 to 208; it reads EGSKNTCDHKEEKSP. Positions 210–213 match the Nuclear localization signal motif; that stretch reads KKPR. The segment at residues 213–268 is a DNA-binding region (myb-like GARP); that stretch reads RMQWTPELHHKFEVAVEKMGSLEKAFPKTILKYMQEELNVQGLTRNNVASHLQKYR.

The protein belongs to the ARR family. Type-B subfamily. Binds the target DNA as a monomer. Post-translationally, two-component system major event consists of a His-to-Asp phosphorelay between a sensor histidine kinase (HK) and a response regulator (RR). In plants, the His-to-Asp phosphorelay involves an additional intermediate named Histidine-containing phosphotransfer protein (HPt). This multistep phosphorelay consists of a His-Asp-His-Asp sequential transfer of a phosphate group between first a His and an Asp of the HK protein, followed by the transfer to a conserved His of the HPt protein and finally the transfer to an Asp in the receiver domain of the RR protein. As to expression, predominantly expressed in mature pistil tip. Also detected in the shoot apical meristem as well as vascular tissue and hydathodes of the leaves.

Its subcellular location is the nucleus. Functionally, putative transcriptional activator that binds specifically to the DNA sequence 5'-[AG]GATT-3'. Functions as a response regulator involved in His-to-Asp phosphorelay signal transduction system. Phosphorylation of the Asp residue in the receiver domain activates the ability of the protein to promote the transcription of target genes. Could directly activate some type-A response regulators in response to cytokinins. This is Putative two-component response regulator ARR20 (ARR20) from Arabidopsis thaliana (Mouse-ear cress).